A 531-amino-acid polypeptide reads, in one-letter code: NAD(P)H-quinone oxidoreductase chain 4 (531 aa).

Helical transmembrane passes span 9–29 (FPWLSASILFPIGSAFVIPFF), 41–61 (FALSIALITFLITVGSYINGF), 93–113 (MPLILLTSFITALAVLAAWPV), 117–137 (PKLFFFLILVMDGGQIAVFAV), 141–161 (LLFFLTWELELIPVYLLLAIW), 173–193 (FIIYTAGSSIFILLAALAMGF), 217–237 (IFCYVGLLIAFGVKLPIVPLH), 248–268 (TAPVHMLLAGILLKMGGYALL), 282–302 (FAPLLIVLGVVNIIYAALTSF), 311–331 (IAYSSISHMGFVLIGIGSFSS), 337–357 (AMLQMVSHGLIGASLFFLVGA), 381–401 (FALWTACSLASLALPGMSGFV), 422–442 (VVMASLAAIGVILTPIYLLSM), and 469–489 (VYIIACLLLPIIGIGLYPRLV).

Belongs to the complex I subunit 4 family.

Its subcellular location is the cellular thylakoid membrane. The catalysed reaction is a plastoquinone + NADH + (n+1) H(+)(in) = a plastoquinol + NAD(+) + n H(+)(out). The enzyme catalyses a plastoquinone + NADPH + (n+1) H(+)(in) = a plastoquinol + NADP(+) + n H(+)(out). Its function is as follows. NDH-1 shuttles electrons from NAD(P)H, via FMN and iron-sulfur (Fe-S) centers, to quinones in the respiratory chain. The immediate electron acceptor for the enzyme in this species is believed to be plastoquinone. Couples the redox reaction to proton translocation (for every two electrons transferred, four hydrogen ions are translocated across the cytoplasmic membrane), and thus conserves the redox energy in a proton gradient. This chain is NAD(P)H-quinone oxidoreductase chain 4, found in Prochlorococcus marinus (strain MIT 9301).